The sequence spans 31 residues: Cytochrome b6-f complex subunit 6 (31 aa).

A helical transmembrane segment spans residues 4-26; the sequence is LTSYFGFLLAASTITPALFIGLN.

The protein belongs to the PetL family. The 4 large subunits of the cytochrome b6-f complex are cytochrome b6, subunit IV (17 kDa polypeptide, PetD), cytochrome f and the Rieske protein, while the 4 small subunits are PetG, PetL, PetM and PetN. The complex functions as a dimer.

It localises to the plastid. It is found in the chloroplast thylakoid membrane. Its function is as follows. Component of the cytochrome b6-f complex, which mediates electron transfer between photosystem II (PSII) and photosystem I (PSI), cyclic electron flow around PSI, and state transitions. PetL is important for photoautotrophic growth as well as for electron transfer efficiency and stability of the cytochrome b6-f complex. The polypeptide is Cytochrome b6-f complex subunit 6 (Phalaenopsis aphrodite subsp. formosana (Moth orchid)).